The sequence spans 390 residues: Chorismate synthase 1 (390 aa).

Residues Arg39 and Arg45 each coordinate NADP(+). The tract at residues 95–117 (EQEEKEMKRKVTKPRPGHADLNG) is disordered. FMN is bound by residues 132-134 (RSS), 253-254 (NA), Gly298, 313-317 (KPIPT), and Arg339.

It belongs to the chorismate synthase family. In terms of assembly, homotetramer. FMNH2 serves as cofactor.

It carries out the reaction 5-O-(1-carboxyvinyl)-3-phosphoshikimate = chorismate + phosphate. It functions in the pathway metabolic intermediate biosynthesis; chorismate biosynthesis; chorismate from D-erythrose 4-phosphate and phosphoenolpyruvate: step 7/7. Its function is as follows. Catalyzes the anti-1,4-elimination of the C-3 phosphate and the C-6 proR hydrogen from 5-enolpyruvylshikimate-3-phosphate (EPSP) to yield chorismate, which is the branch point compound that serves as the starting substrate for the three terminal pathways of aromatic amino acid biosynthesis. This reaction introduces a second double bond into the aromatic ring system. The protein is Chorismate synthase 1 of Bacillus cereus (strain ATCC 14579 / DSM 31 / CCUG 7414 / JCM 2152 / NBRC 15305 / NCIMB 9373 / NCTC 2599 / NRRL B-3711).